We begin with the raw amino-acid sequence, 592 residues long: Putative D-/L-hydantoinase subunit B (592 aa).

It belongs to the HyuB family. As to quaternary structure, may form a complex with HyuA.

Functionally, involved in the asymmetric conversion of racemic 5-substituted hydantoins to the corresponding L-amino acids. HyuA and HyuB are both required for the conversion of D- and L-5-substituted hydantoins to corresponding N-carbamoyl-D- and N-carbamoyl-L-amino acids, respectively. The sequence is that of Putative D-/L-hydantoinase subunit B from Pseudomonas sp. (strain NS671).